The chain runs to 138 residues: Acidic phospholipase A2 Cvv-E6h (138 aa).

Residues 1–16 form the signal peptide; sequence MRTLWIVAVLLLGVEG. Intrachain disulfides connect C42-C131, C44-C60, C59-C111, C65-C138, C66-C104, C73-C97, and C91-C102. Ca(2+)-binding residues include Y43, G45, and G47. The active site involves H63. Residue D64 participates in Ca(2+) binding. D105 is an active-site residue.

This sequence belongs to the phospholipase A2 family. Group II subfamily. D49 sub-subfamily. Ca(2+) serves as cofactor. Expressed by the venom gland.

The protein resides in the secreted. The enzyme catalyses a 1,2-diacyl-sn-glycero-3-phosphocholine + H2O = a 1-acyl-sn-glycero-3-phosphocholine + a fatty acid + H(+). Its function is as follows. Snake venom phospholipase A2 (PLA2) that shows very low inhibition of ADP-induced platelet aggregation in platelet-rich plasma of human, rabbit and guinea pig. In vivo, shows efficient edema-inducing activities in rat paws. PLA2 catalyzes the calcium-dependent hydrolysis of the 2-acyl groups in 3-sn-phosphoglycerides. The protein is Acidic phospholipase A2 Cvv-E6h of Crotalus viridis viridis (Prairie rattlesnake).